Here is a 263-residue protein sequence, read N- to C-terminus: Rhomboid-like protease 3 (263 aa).

6 consecutive transmembrane segments (helical) span residues 37–57, 86–106, 121–141, 142–162, 189–209, and 231–251; these read KSIV…CVLS, VVTP…LVFI, KFLV…MLMQ, PWAL…GMAA, LIYF…GGFL, and VLFY…PPLL. Ser150 (nucleophile) is an active-site residue. His204 is an active-site residue.

The protein belongs to the peptidase S54 family.

It localises to the membrane. The enzyme catalyses Cleaves type-1 transmembrane domains using a catalytic dyad composed of serine and histidine that are contributed by different transmembrane domains.. Its function is as follows. Serine protease involved in intramembrane proteolysis and the subsequent release of polypeptides from their membrane anchors. This Toxoplasma gondii protein is Rhomboid-like protease 3 (ROM3).